A 118-amino-acid polypeptide reads, in one-letter code: SPbeta prophage-derived uncharacterized protein YoqR (118 aa).

This chain is SPbeta prophage-derived uncharacterized protein YoqR (yoqR), found in Bacillus subtilis (strain 168).